A 343-amino-acid polypeptide reads, in one-letter code: Single-pass membrane and coiled-coil domain-containing protein 2 (343 aa).

Residues 86–99 (EHDQDLSKQDKQET) are compositionally biased toward basic and acidic residues. The segment at 86–108 (EHDQDLSKQDKQETDVDEDPQAS) is disordered. A coiled-coil region spans residues 152 to 238 (TEKIDNIIKK…SAKLRMYQME (87 aa)). The helical transmembrane segment at 284–304 (IFIMFDVLTVTGLLCYILFFG) threads the bilayer.

It is found in the membrane. This is Single-pass membrane and coiled-coil domain-containing protein 2 (SMCO2) from Homo sapiens (Human).